A 30-amino-acid chain; its full sequence is Ranatuerin-2OK (30 aa).

A disulfide bridge links Cys23 with Cys30.

Expressed by the skin glands.

It is found in the secreted. Its function is as follows. Antimicrobial peptide. Active against Gram-negative bacterium E.coli (MIC=12.5 uM) and against Gram-positive bacterium S.aureus (MIC=50 uM). The protein is Ranatuerin-2OK of Nidirana okinavana (Kampira Falls frog).